Consider the following 335-residue polypeptide: Transcription factor bHLH63 (335 aa).

Positions 110-160 (MTMNRDDLVEEGEEEKSKITEQNNGSTKSIKKMKHKAKKEENNFSNDSSKV) are disordered. In terms of domain architecture, bHLH spans 178 to 228 (QATDSHSIAERVRREKISERMKFLQDLVPGCDKITGKAGMLDEIINYVQSL).

In terms of assembly, homodimer. Interacts with IBH1. Binds reversibly to CRY2 after blue light illumination. Expressed constitutively in roots, leaves, and stems.

Its subcellular location is the nucleus. In terms of biological role, transcription factor that binds DNA to G box 5'-CACGTG-3' and, to a lower extent, to E-box 5'-CANNTG-3' in vitro. Binds to chromatin DNA of the FT gene and promotes its expression, and thus triggers flowering in response to blue light. The polypeptide is Transcription factor bHLH63 (BHLH63) (Arabidopsis thaliana (Mouse-ear cress)).